The primary structure comprises 384 residues: MTLPELPKDLVEEILCFVPATSLKRLRSSCKEWNRLFKDDKRFARKHIEKAAKQFQPLTLTKNYRICPINVNLHGTTPSLEVKNEVSLVDPHSKNSAAQFNIDRVFHCDGLLLCTSQKDSRFVVWNPLTGVTKWIELGDRYNEGMAFILGYDNKSCNKSYKAMSFNYLDKDSEIYEFSSDSWRVIDDIIKPPHYMDYFRECFSLKGNTYWLGIDRRRRPPDLRITLIKFDFGTERFGYVSLPPPCQVHGFEASNLSVVGDEKLSVLVQGGSTSKTEVWVTSKIGEANVVSWSKVLSLYPKPDVGFWHGLSFLLDEEKKVVLCCKSKGWMEEEDEENVYSVGEDTKFILLNFGVQTIGGYSPIIVNYVPSLGQIELAGSKRKRDY.

Residues 1 to 46 (MTLPELPKDLVEEILCFVPATSLKRLRSSCKEWNRLFKDDKRFARK) enclose the F-box domain. Kelch repeat units lie at residues 156-202 (CNKS…RECF), 264-314 (SVLV…FLLD), and 352-384 (GVQT…KRDY).

This chain is F-box/kelch-repeat protein At3g44120, found in Arabidopsis thaliana (Mouse-ear cress).